The following is a 186-amino-acid chain: Large ribosomal subunit protein uL5 (186 aa).

Belongs to the universal ribosomal protein uL5 family. In terms of assembly, part of the 50S ribosomal subunit; part of the 5S rRNA/L5/L18/L25 subcomplex. Contacts the 5S rRNA and the P site tRNA. Forms a bridge to the 30S subunit in the 70S ribosome.

Its function is as follows. This is one of the proteins that bind and probably mediate the attachment of the 5S RNA into the large ribosomal subunit, where it forms part of the central protuberance. In the 70S ribosome it contacts protein S13 of the 30S subunit (bridge B1b), connecting the 2 subunits; this bridge is implicated in subunit movement. Contacts the P site tRNA; the 5S rRNA and some of its associated proteins might help stabilize positioning of ribosome-bound tRNAs. The protein is Large ribosomal subunit protein uL5 of Ruegeria pomeroyi (strain ATCC 700808 / DSM 15171 / DSS-3) (Silicibacter pomeroyi).